Consider the following 167-residue polypeptide: Effector CFEM8 (167 aa).

An N-terminal signal peptide occupies residues 1–17 (MQFSIVVMAALASLASA). Residues 18-112 (QSMDGIPTCA…TPAAAAPYPT (95 aa)) form the CFEM domain. Cystine bridges form between C26–C68, C30–C63, C40–C47, and C49–C85. D44 is a binding site for heme. N-linked (GlcNAc...) asparagine glycans are attached at residues N117 and N135. G143 carries the GPI-anchor amidated glycine lipid modification. Residues 144–167 (SAPQNVAGGLAGIFGLVVAAAFAL) constitute a propeptide, removed in mature form.

The protein belongs to the RBT5 family.

The protein resides in the cell membrane. Its subcellular location is the secreted. It localises to the host nucleus. The protein localises to the host cell membrane. In terms of biological role, appears to function during host infection, and may play a role in suppressing the host immune response. The sequence is that of Effector CFEM8 from Marssonina brunnea f. sp. multigermtubi (strain MB_m1) (Marssonina leaf spot fungus).